A 179-amino-acid polypeptide reads, in one-letter code: ATP synthase subunit delta (179 aa).

The protein belongs to the ATPase delta chain family. As to quaternary structure, F-type ATPases have 2 components, F(1) - the catalytic core - and F(0) - the membrane proton channel. F(1) has five subunits: alpha(3), beta(3), gamma(1), delta(1), epsilon(1). F(0) has three main subunits: a(1), b(2) and c(10-14). The alpha and beta chains form an alternating ring which encloses part of the gamma chain. F(1) is attached to F(0) by a central stalk formed by the gamma and epsilon chains, while a peripheral stalk is formed by the delta and b chains.

The protein resides in the cell inner membrane. Its function is as follows. F(1)F(0) ATP synthase produces ATP from ADP in the presence of a proton or sodium gradient. F-type ATPases consist of two structural domains, F(1) containing the extramembraneous catalytic core and F(0) containing the membrane proton channel, linked together by a central stalk and a peripheral stalk. During catalysis, ATP synthesis in the catalytic domain of F(1) is coupled via a rotary mechanism of the central stalk subunits to proton translocation. This protein is part of the stalk that links CF(0) to CF(1). It either transmits conformational changes from CF(0) to CF(1) or is implicated in proton conduction. In Burkholderia ambifaria (strain ATCC BAA-244 / DSM 16087 / CCUG 44356 / LMG 19182 / AMMD) (Burkholderia cepacia (strain AMMD)), this protein is ATP synthase subunit delta.